Reading from the N-terminus, the 281-residue chain is Putative phosphatase/phosphodiesterase MPN_349 (281 aa).

4 residues coordinate Fe cation: Asp-12, Glu-43, Asn-44, and Asn-71. His-72 (proton donor) is an active-site residue. His-158, His-183, and His-185 together coordinate Fe cation.

This sequence belongs to the YmdB-like family. Requires Fe(3+) as cofactor.

This is Putative phosphatase/phosphodiesterase MPN_349 from Mycoplasma pneumoniae (strain ATCC 29342 / M129 / Subtype 1) (Mycoplasmoides pneumoniae).